The chain runs to 205 residues: Holliday junction branch migration complex subunit RuvA (205 aa).

The tract at residues 1–64 (MIGKLTGLVD…EDAIRLFGFP (64 aa)) is domain I. The interval 65-143 (SEVERDWFRL…ALGPVDSLTA (79 aa)) is domain II. The interval 144-153 (KLTIAEAEGT) is flexible linker. The segment at 153–205 (TAPVAAQDAITALVNLGYGRPQAAAAVATSLEALGETAPLADLIRRGLKELAR) is domain III.

The protein belongs to the RuvA family. In terms of assembly, homotetramer. Forms an RuvA(8)-RuvB(12)-Holliday junction (HJ) complex. HJ DNA is sandwiched between 2 RuvA tetramers; dsDNA enters through RuvA and exits via RuvB. An RuvB hexamer assembles on each DNA strand where it exits the tetramer. Each RuvB hexamer is contacted by two RuvA subunits (via domain III) on 2 adjacent RuvB subunits; this complex drives branch migration. In the full resolvosome a probable DNA-RuvA(4)-RuvB(12)-RuvC(2) complex forms which resolves the HJ.

It localises to the cytoplasm. Its function is as follows. The RuvA-RuvB-RuvC complex processes Holliday junction (HJ) DNA during genetic recombination and DNA repair, while the RuvA-RuvB complex plays an important role in the rescue of blocked DNA replication forks via replication fork reversal (RFR). RuvA specifically binds to HJ cruciform DNA, conferring on it an open structure. The RuvB hexamer acts as an ATP-dependent pump, pulling dsDNA into and through the RuvAB complex. HJ branch migration allows RuvC to scan DNA until it finds its consensus sequence, where it cleaves and resolves the cruciform DNA. This Beijerinckia indica subsp. indica (strain ATCC 9039 / DSM 1715 / NCIMB 8712) protein is Holliday junction branch migration complex subunit RuvA.